An 89-amino-acid polypeptide reads, in one-letter code: Small ribosomal subunit protein uS15 (89 aa).

The protein belongs to the universal ribosomal protein uS15 family. In terms of assembly, part of the 30S ribosomal subunit. Forms a bridge to the 50S subunit in the 70S ribosome, contacting the 23S rRNA.

Functionally, one of the primary rRNA binding proteins, it binds directly to 16S rRNA where it helps nucleate assembly of the platform of the 30S subunit by binding and bridging several RNA helices of the 16S rRNA. Forms an intersubunit bridge (bridge B4) with the 23S rRNA of the 50S subunit in the ribosome. In Carboxydothermus hydrogenoformans (strain ATCC BAA-161 / DSM 6008 / Z-2901), this protein is Small ribosomal subunit protein uS15.